Reading from the N-terminus, the 312-residue chain is MQSYKYDKAIVPESKNGGSPALNNNPRKGGSKRVLLICLDLFCLFMAALPFLIIETSTIKPYRRGFYCNDESIKYPLKVSETINDAVLCAVGIVIAILRIITGEFYRIYYLKEKSRSTIQNPYVAALYKQVGCFLFGCAISQSFTDIAKVSIGRLRPHFLSVCDPDFSQINCSEGYIQNYRCRGEDSKVQEARKSFFSGHASFSMFTMLYLVLYLQARFTWRGARLLRPLLQFTLLMMAFYTGLSRVSDYKHHPSDVLAGFAQGALVACCIVFFVSDLFKTKTTLSLPAPAIRREILSPVDIMDRSNHHNMV.

At 1 to 33 the chain is on the cytoplasmic side; it reads MQSYKYDKAIVPESKNGGSPALNNNPRKGGSKR. Ser19 carries the post-translational modification Phosphoserine. Residues 34 to 54 traverse the membrane as a helical segment; sequence VLLICLDLFCLFMAALPFLII. Residues 55 to 85 lie on the Extracellular side of the membrane; the sequence is ETSTIKPYRRGFYCNDESIKYPLKVSETIND. A helical membrane pass occupies residues 86 to 106; that stretch reads AVLCAVGIVIAILRIITGEFY. The Cytoplasmic segment spans residues 107–123; the sequence is RIYYLKEKSRSTIQNPY. The Dityrosine basolateral targeting motif signature appears at 109–110; it reads YY. The helical transmembrane segment at 124-144 threads the bilayer; that stretch reads VAALYKQVGCFLFGCAISQSF. The Extracellular segment spans residues 145–194; the sequence is TDIAKVSIGRLRPHFLSVCDPDFSQINCSEGYIQNYRCRGEDSKVQEARK. Residues 149–157 form a phosphatase sequence motif I region; it reads KVSIGRLRP. Residue Asn171 is glycosylated (N-linked (GlcNAc...) asparagine). The Integrin-binding motif signature appears at 183 to 185; it reads RGE. A helical transmembrane segment spans residues 195–215; it reads SFFSGHASFSMFTMLYLVLYL. The phosphatase sequence motif II stretch occupies residues 197-200; that stretch reads FSGH. His200 acts as the Proton donors in catalysis. Topologically, residues 216-226 are cytoplasmic; that stretch reads QARFTWRGARL. A helical transmembrane segment spans residues 227–244; that stretch reads LRPLLQFTLLMMAFYTGL. The segment at 245-256 is phosphatase sequence motif III; that stretch reads SRVSDYKHHPSD. Topologically, residues 245 to 258 are extracellular; sequence SRVSDYKHHPSDVL. His252 functions as the Nucleophile in the catalytic mechanism. The helical transmembrane segment at 259–279 threads the bilayer; the sequence is AGFAQGALVACCIVFFVSDLF. A mediates interaction with CTNND1 region spans residues 276–312; sequence SDLFKTKTTLSLPAPAIRREILSPVDIMDRSNHHNMV. Topologically, residues 280–312 are cytoplasmic; the sequence is KTKTTLSLPAPAIRREILSPVDIMDRSNHHNMV.

It belongs to the PA-phosphatase related phosphoesterase family. In terms of assembly, forms functional homodimers and homooligomers that are not required for substrate recognition and catalytic activity. Can also form heterooligomers with other PLPP2 and PLPP3. Interacts with CTNND1; negatively regulates the PLPP3-mediated stabilization of beta-catenin/CTNNB1. N-glycosylated. Contains high-mannose oligosaccharides. In terms of tissue distribution, detected in epithelial cells of intestinal mucosa, lung, liver and brain.

It localises to the cell membrane. It is found in the basolateral cell membrane. The protein resides in the endoplasmic reticulum membrane. Its subcellular location is the endoplasmic reticulum-Golgi intermediate compartment membrane. The protein localises to the golgi apparatus membrane. It localises to the golgi apparatus. It is found in the trans-Golgi network membrane. The protein resides in the membrane raft. It carries out the reaction a 1,2-diacyl-sn-glycero-3-phosphate + H2O = a 1,2-diacyl-sn-glycerol + phosphate. The enzyme catalyses 1,2-dihexadecanoyl-sn-glycero-3-phosphate + H2O = 1,2-dihexadecanoyl-sn-glycerol + phosphate. The catalysed reaction is 1,2-di-(9Z-octadecenoyl)-sn-glycero-3-phosphate + H2O = 1,2-di-(9Z-octadecenoyl)-sn-glycerol + phosphate. It catalyses the reaction a monoacyl-sn-glycero-3-phosphate + H2O = a monoacylglycerol + phosphate. It carries out the reaction (9Z)-octadecenoyl-sn-glycero-3-phosphate + H2O = (9Z-octadecenoyl)-glycerol + phosphate. The enzyme catalyses sphing-4-enine 1-phosphate + H2O = sphing-4-enine + phosphate. The catalysed reaction is an N-acylsphing-4-enine 1-phosphate + H2O = an N-acylsphing-4-enine + phosphate. It catalyses the reaction N-(octanoyl)-sphing-4-enine-1-phosphate + H2O = N-octanoylsphing-4-enine + phosphate. It carries out the reaction N-(9Z-octadecenoyl)-ethanolamine phosphate + H2O = N-(9Z-octadecenoyl) ethanolamine + phosphate. The protein operates within lipid metabolism; phospholipid metabolism. With respect to regulation, magnesium-independent phospholipid phosphatase. Insensitive to N-ethylmaleimide. Inhibited by sphingosine, zinc ions and modestly by propanolol. Functionally, magnesium-independent phospholipid phosphatase of the plasma membrane that catalyzes the dephosphorylation of a variety of glycerolipid and sphingolipid phosphate esters including phosphatidate/PA, lysophosphatidate/LPA, diacylglycerol pyrophosphate/DGPP, sphingosine 1-phosphate/S1P and ceramide 1-phosphate/C1P. Also acts on N-oleoyl ethanolamine phosphate/N-(9Z-octadecenoyl)-ethanolamine phosphate, a potential physiological compound. Has both an extracellular and an intracellular phosphatase activity, allowing the hydrolysis and the cellular uptake of these bioactive lipid mediators from the milieu, regulating signal transduction in different cellular processes. Through the dephosphorylation of extracellular sphingosine-1-phosphate and the regulation of its extra- and intracellular availability, plays a role in vascular homeostasis, regulating endothelial cell migration, adhesion, survival, proliferation and the production of pro-inflammatory cytokines. By maintaining the appropriate levels of this lipid in the cerebellum, also ensure its proper development and function. Through its intracellular lipid phosphatase activity may act in early compartments of the secretory pathway, regulating the formation of Golgi to endoplasmic reticulum retrograde transport carriers. Its function is as follows. Independently of this phosphatase activity may also function in the Wnt signaling pathway and the stabilization of beta-catenin/CTNNB1, thereby regulating cell proliferation, migration and differentiation in angiogenesis or yet in tumor growth. Also plays a role in integrin-mediated cell-cell adhesion in angiogenesis. This Rattus norvegicus (Rat) protein is Phospholipid phosphatase 3.